Reading from the N-terminus, the 551-residue chain is Chitinase (551 aa).

The first 17 residues, 1–17, serve as a signal peptide directing secretion; it reads MLYKLLNVLWLVAVSNA. The chitin binding domain (CBD) stretch occupies residues 1-149; the sequence is MLYKLLNVLW…NKPGRREDKI (149 aa). One can recognise a GH18 domain in the interval 148–548; the sequence is KIVAAYFVEW…NAINAQFKPK (401 aa). A glycan (N-linked (GlcNAc...) asparagine; by host) is linked at Asn173. The active-site Proton donor is Glu305. Asn444 carries N-linked (GlcNAc...) asparagine; by host glycosylation. The Prevents secretion from ER motif lies at 548 to 551; the sequence is KDEL.

This sequence belongs to the glycosyl hydrolase 18 family. Chitinase class II subfamily. Interacts with host VCATH.

The protein localises to the host endoplasmic reticulum lumen. The enzyme catalyses Random endo-hydrolysis of N-acetyl-beta-D-glucosaminide (1-&gt;4)-beta-linkages in chitin and chitodextrins.. Functionally, plays a role in host liquefaction to facilitate horizontal transmission of the virus by hydrolyzing beta-chitin and by regulating the cysteine protease VCATH. Localized in the host reticulum endoplasmic via its KDEL motif, interacts with and thus prevents VCATH secretion before host cell lysis occurs. The polypeptide is Chitinase (CHIA) (Lepidoptera (butterflies and moths)).